The following is a 500-amino-acid chain: Probable 26S proteasome non-ATPase regulatory subunit 3 (500 aa).

Positions 253-432 (ARFLYYLGRI…GYMRTKESTD (180 aa)) constitute a PCI domain. The segment at 462-484 (RYPPKSYGKELESAEERREREQQ) is disordered. Basic and acidic residues predominate over residues 468 to 484 (YGKELESAEERREREQQ).

Belongs to the proteasome subunit S3 family. As to quaternary structure, the 26S proteasome is composed of a core protease, known as the 20S proteasome, capped at one or both ends by the 19S regulatory complex (RC). The RC is composed of at least 18 different subunits in two subcomplexes, the base and the lid, which form the portions proximal and distal to the 20S proteolytic core, respectively.

In terms of biological role, acts as a regulatory subunit of the 26 proteasome which is involved in the ATP-dependent degradation of ubiquitinated proteins. In Anopheles stephensi (Indo-Pakistan malaria mosquito), this protein is Probable 26S proteasome non-ATPase regulatory subunit 3 (DOXA2).